We begin with the raw amino-acid sequence, 315 residues long: Homoserine O-succinyltransferase (315 aa).

Cys-142 (acyl-thioester intermediate) is an active-site residue. Residues Lys-163 and Ser-192 each coordinate substrate. His-235 functions as the Proton acceptor in the catalytic mechanism. Residue Glu-237 is part of the active site. Position 249 (Arg-249) interacts with substrate.

This sequence belongs to the MetA family.

It localises to the cytoplasm. The catalysed reaction is L-homoserine + succinyl-CoA = O-succinyl-L-homoserine + CoA. It functions in the pathway amino-acid biosynthesis; L-methionine biosynthesis via de novo pathway; O-succinyl-L-homoserine from L-homoserine: step 1/1. Functionally, transfers a succinyl group from succinyl-CoA to L-homoserine, forming succinyl-L-homoserine. The polypeptide is Homoserine O-succinyltransferase (Tolumonas auensis (strain DSM 9187 / NBRC 110442 / TA 4)).